The following is a 337-amino-acid chain: DNA-directed RNA polymerase subunit alpha (337 aa).

The interval Met-1–Glu-233 is alpha N-terminal domain (alpha-NTD). The tract at residues Gly-266–Ile-337 is alpha C-terminal domain (alpha-CTD).

This sequence belongs to the RNA polymerase alpha chain family. In plastids the minimal PEP RNA polymerase catalytic core is composed of four subunits: alpha, beta, beta', and beta''. When a (nuclear-encoded) sigma factor is associated with the core the holoenzyme is formed, which can initiate transcription.

The protein resides in the plastid. Its subcellular location is the chloroplast. It catalyses the reaction RNA(n) + a ribonucleoside 5'-triphosphate = RNA(n+1) + diphosphate. In terms of biological role, DNA-dependent RNA polymerase catalyzes the transcription of DNA into RNA using the four ribonucleoside triphosphates as substrates. This chain is DNA-directed RNA polymerase subunit alpha, found in Dioscorea elephantipes (Elephant's foot yam).